We begin with the raw amino-acid sequence, 125 residues long: Small ribosomal subunit protein eS8 (125 aa).

Positions 1-11 are enriched in polar residues; it reads MAISQGKSTRL. A disordered region spans residues 1-38; the sequence is MAISQGKSTRLPSGARNVANRGKRKAELGRDPAETRVD. Residues 25–38 are compositionally biased toward basic and acidic residues; that stretch reads KAELGRDPAETRVD.

It belongs to the eukaryotic ribosomal protein eS8 family. As to quaternary structure, part of the 30S ribosomal subunit.

The sequence is that of Small ribosomal subunit protein eS8 from Methanobrevibacter smithii (strain ATCC 35061 / DSM 861 / OCM 144 / PS).